Consider the following 392-residue polypeptide: Chorismate synthase (392 aa).

Positions 40 and 46 each coordinate NADP(+). Residues 135-137 (RAS), 256-257 (QA), G300, 315-319 (KPIST), and R341 contribute to the FMN site.

Belongs to the chorismate synthase family. In terms of assembly, homotetramer. It depends on FMNH2 as a cofactor.

It catalyses the reaction 5-O-(1-carboxyvinyl)-3-phosphoshikimate = chorismate + phosphate. Its pathway is metabolic intermediate biosynthesis; chorismate biosynthesis; chorismate from D-erythrose 4-phosphate and phosphoenolpyruvate: step 7/7. Catalyzes the anti-1,4-elimination of the C-3 phosphate and the C-6 proR hydrogen from 5-enolpyruvylshikimate-3-phosphate (EPSP) to yield chorismate, which is the branch point compound that serves as the starting substrate for the three terminal pathways of aromatic amino acid biosynthesis. This reaction introduces a second double bond into the aromatic ring system. This Acidothermus cellulolyticus (strain ATCC 43068 / DSM 8971 / 11B) protein is Chorismate synthase.